A 112-amino-acid chain; its full sequence is Putative pterin-4-alpha-carbinolamine dehydratase (112 aa).

Belongs to the pterin-4-alpha-carbinolamine dehydratase family.

The catalysed reaction is (4aS,6R)-4a-hydroxy-L-erythro-5,6,7,8-tetrahydrobiopterin = (6R)-L-erythro-6,7-dihydrobiopterin + H2O. This chain is Putative pterin-4-alpha-carbinolamine dehydratase, found in Hahella chejuensis (strain KCTC 2396).